A 1734-amino-acid polypeptide reads, in one-letter code: Complement C4-A (1734 aa).

A signal peptide spans 1 to 19; that stretch reads MRLLWGLAWVFSFCASSLQ. Cys66 and Cys95 are disulfide-bonded. Asn224 carries N-linked (GlcNAc...) asparagine glycosylation. A disulfide bridge links Cys633 with Cys667. Residues 674–677 constitute a propeptide that is removed on maturation; it reads RQKR. 3 disulfide bridges follow: Cys700-Cys726, Cys701-Cys733, and Cys714-Cys734. Positions 700 to 734 constitute an Anaphylatoxin-like domain; the sequence is CCQDGMTKLPMKRTCEQRAARVPQQACREPFLSCC. Residues Asn743 and Asn859 are each glycosylated (N-linked (GlcNAc...) asparagine). A cross-link (isoglutamyl cysteine thioester (Cys-Gln)) is located at residues 1002-1005; it reads CAEQ. Residues Asn1128 and Asn1383 are each glycosylated (N-linked (GlcNAc...) asparagine). At Tyr1409 the chain carries Sulfotyrosine. A propeptide spanning residues 1437 to 1443 is cleaved from the precursor; that stretch reads RRSRRRR. Intrachain disulfides connect Cys1461-Cys1525, Cys1573-Cys1578, Cys1585-Cys1663, Cys1608-Cys1732, and Cys1708-Cys1717. Residues 1585–1732 enclose the NTR domain; that stretch reads CPRLLRSLER…FLMEFSSRGC (148 aa).

In absence of complement activation, circulates in blood as a disulfide-linked trimer of an alpha, beta and gamma chain. In terms of assembly, complement C4b is composed of Complement C4b-A, Complement C4 beta and Complement C4 gamma chains that are associated via disulfide bonds. Non-enzymatic component of the C3 convertase, also named C4bC2b, composed of the serine protease complement C2b (C2), as well as complement C4b. Non-enzymatic component of the C5 convertase, also named C4bC2bC3b, composed of the serine protease complement C2b (C2), complement C3b, as well as complement C4b. In terms of processing, prior to secretion, the single-chain precursor is enzymatically cleaved by plasminogen (PLG) to yield non-identical chains alpha, beta and gamma. During activation of the complement systems, the alpha chain is cleaved into C4a and C4b by different proteases depending on the complement pathway: C4b stays linked to the beta and gamma chains, while C4a is released in the plasma. The alpha chain is cleaved by C1S to generate C4a and C4b following activation by the classical complement system. The alpha chain is cleaved to generate C4a and C4b by MASP2 following activation by the lectin complement system. The alpha chain is cleaved by GZMK to generate C4a and C4b following activation by the GZMK complement system. Further degradation of C4b by C1 into the inactive fragments C4c and C4d blocks the generation of C3 convertase. The proteolytic cleavages often are incomplete so that many structural forms can be found in plasma. Upon activation, the internal thioester bond reacts with carbohydrate antigens on the target surface to form amide or ester bonds, leading to covalent association with the surface of pathogens. Post-translationally, complement C4b interacts with complement C3b via a thioester linkage. In terms of processing, N- and O-glycosylated. O-glycosylated with a core 1 or possibly core 8 glycan.

It is found in the secreted. The protein localises to the synapse. Its subcellular location is the cell projection. It localises to the axon. The protein resides in the dendrite. It is found in the cell surface. Its activity is regulated as follows. Specifically inhibited by nanobody hC4Nb8, inhibiting the classical complement pathway. Functionally, precursor of non-enzymatic components of the classical, lectin and GZMK complement pathways, which consist in a cascade of proteins that leads to phagocytosis and breakdown of pathogens and signaling that strengthens the adaptive immune system. Non-enzymatic component of C3 and C5 convertases. Generated following cleavage by complement proteases (C1S, MASP2 or GZMK, depending on the complement pathway), it covalently attaches to the surface of pathogens, where it acts as an opsonin that marks the surface of antigens for removal. It then recruits the serine protease complement C2b to form the C3 and C5 convertases, which cleave and activate C3 and C5, respectively, the next components of the complement pathways. Complement C4b-A isotype is responsible for effective binding to form amide bonds with immune aggregates or protein antigens, while complement C4b-B isotype catalyzes the transacylation of the thioester carbonyl group to form ester bonds with carbohydrate antigens. Its function is as follows. Putative humoral mediator released following cleavage by complement proteases (C1S, MASP2 or GZMK, depending on the complement pathway). While it is strongly similar to anaphylatoxins, its role is unclear. Was reported to act as a mediator of local inflammatory process; however these effects were probably due to contamination with C3a and/C5a anaphylatoxins in biological assays. The protein is Complement C4-A of Mus musculus (Mouse).